We begin with the raw amino-acid sequence, 548 residues long: Probable 5-epi-aristolochene synthase 4 (548 aa).

5 residues coordinate Mg(2+): D301, D305, D444, T448, and E452. The DDXXD motif signature appears at D301–D305.

It belongs to the terpene synthase family. As to quaternary structure, monomer. Mg(2+) is required as a cofactor.

The protein resides in the cytoplasm. It catalyses the reaction (2E,6E)-farnesyl diphosphate = (+)-5-epi-aristolochene + diphosphate. It participates in secondary metabolite biosynthesis; terpenoid biosynthesis. Catalyzes the cyclization of trans,trans-farnesyl diphosphate (FPP) to the bicyclic intermediate 5-epi-aristolochene, initial step in the conversion of FPP to the sesquiterpenoid antifungal phytoalexin capsidiol. Produces germacrene A as an enzyme-bound intermediate that is not released by the enzyme, but is further cyclized to produce the bicyclic 5-epi-aristolochene. The sequence is that of Probable 5-epi-aristolochene synthase 4 from Nicotiana attenuata (Coyote tobacco).